We begin with the raw amino-acid sequence, 431 residues long: 5-methylthioadenosine/S-adenosylhomocysteine deaminase (431 aa).

Residues His-63 and His-65 each coordinate Zn(2+). Residues Glu-92, Arg-144, and His-184 each contribute to the substrate site. His-211 is a binding site for Zn(2+). Residues Glu-214 and Asp-299 each coordinate substrate. Asp-299 contacts Zn(2+).

It belongs to the metallo-dependent hydrolases superfamily. MTA/SAH deaminase family. Zn(2+) is required as a cofactor.

The enzyme catalyses S-adenosyl-L-homocysteine + H2O + H(+) = S-inosyl-L-homocysteine + NH4(+). It catalyses the reaction S-methyl-5'-thioadenosine + H2O + H(+) = S-methyl-5'-thioinosine + NH4(+). Functionally, catalyzes the deamination of 5-methylthioadenosine and S-adenosyl-L-homocysteine into 5-methylthioinosine and S-inosyl-L-homocysteine, respectively. Is also able to deaminate adenosine. The protein is 5-methylthioadenosine/S-adenosylhomocysteine deaminase of Thermoanaerobacter pseudethanolicus (strain ATCC 33223 / 39E) (Clostridium thermohydrosulfuricum).